The following is a 254-amino-acid chain: 3-deoxy-manno-octulosonate cytidylyltransferase (254 aa).

Belongs to the KdsB family.

It localises to the cytoplasm. The catalysed reaction is 3-deoxy-alpha-D-manno-oct-2-ulosonate + CTP = CMP-3-deoxy-beta-D-manno-octulosonate + diphosphate. It participates in nucleotide-sugar biosynthesis; CMP-3-deoxy-D-manno-octulosonate biosynthesis; CMP-3-deoxy-D-manno-octulosonate from 3-deoxy-D-manno-octulosonate and CTP: step 1/1. The protein operates within bacterial outer membrane biogenesis; lipopolysaccharide biosynthesis. In terms of biological role, activates KDO (a required 8-carbon sugar) for incorporation into bacterial lipopolysaccharide in Gram-negative bacteria. In Haemophilus influenzae (strain ATCC 51907 / DSM 11121 / KW20 / Rd), this protein is 3-deoxy-manno-octulosonate cytidylyltransferase.